Consider the following 381-residue polypeptide: Heme A synthase (381 aa).

A disordered region spans residues 1–23 (MARRPVFQEVTETTPPGTTPSGG). The span at 11-23 (TETTPPGTTPSGG) shows a compositional bias: low complexity. 8 helical membrane passes run 34 to 54 (GAIR…IALG), 120 to 140 (RLLG…FLAT), 151 to 171 (LLLL…MVHS), 185 to 205 (LATH…YVLA), 228 to 248 (TTGL…VAGI), 285 to 305 (LVQF…VVVF), 319 to 339 (AYVA…MNVL), and 342 to 362 (SPLP…TLIL). Residue His-290 participates in heme binding. His-350 is a heme binding site.

Belongs to the COX15/CtaA family. Type 2 subfamily. In terms of assembly, interacts with CtaB. Heme b serves as cofactor.

It is found in the cell membrane. It catalyses the reaction Fe(II)-heme o + 2 A + H2O = Fe(II)-heme a + 2 AH2. It functions in the pathway porphyrin-containing compound metabolism; heme A biosynthesis; heme A from heme O: step 1/1. In terms of biological role, catalyzes the conversion of heme O to heme A by two successive hydroxylations of the methyl group at C8. The first hydroxylation forms heme I, the second hydroxylation results in an unstable dihydroxymethyl group, which spontaneously dehydrates, resulting in the formyl group of heme A. This chain is Heme A synthase, found in Paracoccus denitrificans (strain Pd 1222).